Reading from the N-terminus, the 557-residue chain is Dihydroxy-acid dehydratase (557 aa).

Residue Asp78 coordinates Mg(2+). A [2Fe-2S] cluster-binding site is contributed by Cys119. The Mg(2+) site is built by Asp120 and Lys121. At Lys121 the chain carries N6-carboxylysine. [2Fe-2S] cluster is bound at residue Cys192. Glu443 lines the Mg(2+) pocket. Ser469 serves as the catalytic Proton acceptor.

The protein belongs to the IlvD/Edd family. In terms of assembly, homodimer. [2Fe-2S] cluster serves as cofactor. Mg(2+) is required as a cofactor.

It catalyses the reaction (2R)-2,3-dihydroxy-3-methylbutanoate = 3-methyl-2-oxobutanoate + H2O. The enzyme catalyses (2R,3R)-2,3-dihydroxy-3-methylpentanoate = (S)-3-methyl-2-oxopentanoate + H2O. It functions in the pathway amino-acid biosynthesis; L-isoleucine biosynthesis; L-isoleucine from 2-oxobutanoate: step 3/4. Its pathway is amino-acid biosynthesis; L-valine biosynthesis; L-valine from pyruvate: step 3/4. Its function is as follows. Functions in the biosynthesis of branched-chain amino acids. Catalyzes the dehydration of (2R,3R)-2,3-dihydroxy-3-methylpentanoate (2,3-dihydroxy-3-methylvalerate) into 2-oxo-3-methylpentanoate (2-oxo-3-methylvalerate) and of (2R)-2,3-dihydroxy-3-methylbutanoate (2,3-dihydroxyisovalerate) into 2-oxo-3-methylbutanoate (2-oxoisovalerate), the penultimate precursor to L-isoleucine and L-valine, respectively. In Sulfurihydrogenibium sp. (strain YO3AOP1), this protein is Dihydroxy-acid dehydratase.